A 500-amino-acid polypeptide reads, in one-letter code: MVILSLVSCSFSVFSPPISLRLHLPPVTSLCSHGTFPASSTFRSQLQPLLISCLNHREPALTFRCSCLSSPIESGSQIESLFSLFRDIGFIEEETEMILAKNPDIKSTSLDKIGARVASLQSLKINGFPLQGLIAKCPNLLTSEEFDLVISFLVDELEGRLDPELVERLLSVVDTSILLSFNQKVRLLLLHGIPKEKISHVLNKVYLNKLLYQKSVEDIERLISFLEPFGGIGIIARRPVILNSDLDSQLIPRVDFIRNLSGEDDFATGTVLRRLPAILSYSVEHMNGQVEFLKSFAGLTSEQVFKIVHVFPNVISTSKERKLRPRIEFLKECGFDSPGMFKFLSKAPLILALSENNLSHKLGFLVKIGYKHRTKELAFAMGAVTRTSSDNMQRVIGLYLSYGLSFEDILAMSTKHPQVLQYNYTSLEEKLEYLIEYMGREVEELLAFPAFLGYKLDSRIKHRYEEKLKSRGENMSLNKLLTVSAERFSKAADNIEMICL.

The transit peptide at 1–64 (MVILSLVSCS…NHREPALTFR (64 aa)) directs the protein to the chloroplast.

This sequence belongs to the mTERF family.

The protein localises to the plastid. It localises to the chloroplast. Transcription termination factor that is transcriptionally active in chloroplasts. The polypeptide is Transcription termination factor MTERF8, chloroplastic (Arabidopsis thaliana (Mouse-ear cress)).